Consider the following 458-residue polypeptide: Monomethylamine methyltransferase MtmB1 (458 aa).

Residue Pyl202 is a non-standard amino acid, pyrrolysine.

It belongs to the monomethylamine methyltransferase family. As to quaternary structure, can form a complex with MtmC.

It catalyses the reaction Co(I)-[methylamine-specific corrinoid protein] + methylamine + H(+) = methyl-Co(III)-[methylamine-specific corrinoid protein] + NH4(+). The protein operates within one-carbon metabolism; methanogenesis from methylamine. Functionally, catalyzes the transfer of the methyl group from monomethylamine to the corrinoid cofactor of MtmC. The polypeptide is Monomethylamine methyltransferase MtmB1 (mtmB1) (Methanosarcina acetivorans (strain ATCC 35395 / DSM 2834 / JCM 12185 / C2A)).